Reading from the N-terminus, the 444-residue chain is Acetyl-CoA--deacetylcephalosporin C acetyltransferase (444 aa).

Positions 1 to 71 are excised as a propeptide; sequence MLPSAQVARL…PQIANRFEAS (71 aa). The region spanning 112–425 is the AB hydrolase-1 domain; the sequence is VIVCHTLTSS…DTNEGHDFFV (314 aa). Residues Ser-208 and His-421 contribute to the active site.

Belongs to the AB hydrolase superfamily. MetX family. As to quaternary structure, heterodimer of chain I and chain II.

The catalysed reaction is deacetylcephalosporin C + acetyl-CoA = cephalosporin C + CoA. The protein operates within antibiotic biosynthesis; cephalosporin C biosynthesis. Its function is as follows. Catalyzes the conversion of deacetylcephalosporin C to cephalosporin C. The polypeptide is Acetyl-CoA--deacetylcephalosporin C acetyltransferase (CEFG) (Hapsidospora chrysogena (Acremonium chrysogenum)).